We begin with the raw amino-acid sequence, 268 residues long: uncharacterized protein (268 aa).

4 helical membrane passes run 32-52, 70-90, 125-145, and 237-257; these read SLLL…IFFI, VFVG…AFLF, GVSS…FYIF, and IKYI…AYLT.

The protein belongs to the CbiQ family.

It localises to the cell membrane. This is an uncharacterized protein from Methanocaldococcus jannaschii (strain ATCC 43067 / DSM 2661 / JAL-1 / JCM 10045 / NBRC 100440) (Methanococcus jannaschii).